The sequence spans 225 residues: KDP operon transcriptional regulatory protein KdpE (225 aa).

The region spanning 3–116 (NVLIVEDEQA…ELQARLRVAL (114 aa)) is the Response regulatory domain. Asp52 is modified (4-aspartylphosphate). Positions 126-225 (DPLVKFSDVT…ETGIGYRFML (100 aa)) form a DNA-binding region, ompR/PhoB-type.

Post-translationally, phosphorylated by KdpD.

It is found in the cytoplasm. Member of the two-component regulatory system KdpD/KdpE involved in the regulation of the kdp operon. This is KDP operon transcriptional regulatory protein KdpE (kdpE) from Escherichia coli (strain K12).